A 139-amino-acid chain; its full sequence is Small ribosomal subunit protein uS12 (139 aa).

The residue at position 102 (aspartate 102) is a 3-methylthioaspartic acid.

This sequence belongs to the universal ribosomal protein uS12 family. Part of the 30S ribosomal subunit. Contacts proteins S8 and S17. May interact with IF1 in the 30S initiation complex.

In terms of biological role, with S4 and S5 plays an important role in translational accuracy. Interacts with and stabilizes bases of the 16S rRNA that are involved in tRNA selection in the A site and with the mRNA backbone. Located at the interface of the 30S and 50S subunits, it traverses the body of the 30S subunit contacting proteins on the other side and probably holding the rRNA structure together. The combined cluster of proteins S8, S12 and S17 appears to hold together the shoulder and platform of the 30S subunit. This is Small ribosomal subunit protein uS12 from Bacillus pumilus (strain SAFR-032).